We begin with the raw amino-acid sequence, 289 residues long: Delta-sarcoglycan (289 aa).

Residues 1–37 (MPQEQYSHHRSTMPSSEGPHIYKVGIYGWRKRCLYFF) lie on the Cytoplasmic side of the membrane. A helical; Signal-anchor for type II membrane protein membrane pass occupies residues 38 to 56 (VLLLMILILVNLAMTIWIL). The Extracellular segment spans residues 57–289 (KVMNFTIDGM…TCQINTSVCL (233 aa)). N-linked (GlcNAc...) asparagine glycans are attached at residues Asn-60 and Asn-108. Disulfide bonds link Cys-263–Cys-288 and Cys-265–Cys-281. A glycan (N-linked (GlcNAc...) asparagine) is linked at Asn-284.

The protein belongs to the sarcoglycan beta/delta/gamma/zeta family. Interacts with FLNC. Cross-link to form 2 major subcomplexes: one consisting of SGCB, SGCD and SGCG and the other consisting of SGCB and SGCD. The association between SGCB and SGCG is particularly strong while SGCA is loosely associated with the other sarcoglycans. Interacts with DAG1. In terms of processing, disulfide bonds are present. In terms of tissue distribution, most strongly expressed in skeletal and heart muscle. Also detected in proliferating myoblasts.

Its subcellular location is the cell membrane. It localises to the sarcolemma. The protein localises to the cytoplasm. The protein resides in the cytoskeleton. Component of the sarcoglycan complex, a subcomplex of the dystrophin-glycoprotein complex which forms a link between the F-actin cytoskeleton and the extracellular matrix. This Mus musculus (Mouse) protein is Delta-sarcoglycan (Sgcd).